Reading from the N-terminus, the 485-residue chain is NADH-quinone oxidoreductase subunit N (485 aa).

Transmembrane regions (helical) follow at residues 10-30 (AMLP…SIAW), 35-55 (FINA…LYFV), 75-95 (FYIG…YPWL), 104-124 (EFYL…SANH), 125-145 (LASL…LIGY), 159-179 (YMLL…LLYA), 203-223 (ILAG…LVPF), 235-255 (PAPV…AVVM), 271-291 (LVLS…AISQ), 297-317 (LLGY…VAVQ), 327-347 (GVYL…VSLM), 374-394 (AVMT…GFIG), 408-427 (WWLT…YYLR), and 449-469 (ALTA…VLGI).

The protein belongs to the complex I subunit 2 family. In terms of assembly, NDH-1 is composed of 13 different subunits. Subunits NuoA, H, J, K, L, M, N constitute the membrane sector of the complex.

Its subcellular location is the cell inner membrane. It carries out the reaction a quinone + NADH + 5 H(+)(in) = a quinol + NAD(+) + 4 H(+)(out). In terms of biological role, NDH-1 shuttles electrons from NADH, via FMN and iron-sulfur (Fe-S) centers, to quinones in the respiratory chain. The immediate electron acceptor for the enzyme in this species is believed to be ubiquinone. Couples the redox reaction to proton translocation (for every two electrons transferred, four hydrogen ions are translocated across the cytoplasmic membrane), and thus conserves the redox energy in a proton gradient. The polypeptide is NADH-quinone oxidoreductase subunit N (Yersinia enterocolitica serotype O:8 / biotype 1B (strain NCTC 13174 / 8081)).